The primary structure comprises 346 residues: Senescence-specific cysteine protease SAG12 (346 aa).

The first 25 residues, 1–25, serve as a signal peptide directing secretion; that stretch reads MALKHMQIFLFVAIFSSFCFSITLS. Residue asparagine 124 is glycosylated (N-linked (GlcNAc...) asparagine). Cystine bridges form between cysteine 151–cysteine 192, cysteine 185–cysteine 225, and cysteine 283–cysteine 335. Residue cysteine 154 is part of the active site. Histidine 289 is a catalytic residue. Asparagine 301 carries N-linked (GlcNAc...) asparagine glycosylation. Asparagine 310 is an active-site residue.

It belongs to the peptidase C1 family. In terms of tissue distribution, found in senescent leaves, especially in senescence-associated vacuoles- (SAVs) containing cells (e.g. mesophyll and guard cells), and in senescencing ovules of unfertilised pistils.

Its subcellular location is the vacuole. Its function is as follows. Cysteine protease that may have a developmental senescence specific cell death function during apoptosis, heavy metal detoxification, and hypersensitive response. The chain is Senescence-specific cysteine protease SAG12 from Arabidopsis thaliana (Mouse-ear cress).